Consider the following 436-residue polypeptide: Cyclic nucleotide-binding domain-containing protein 1 (436 aa).

Residues 89 to 105 (EQRELNEGKEESQHQQP) are compositionally biased toward basic and acidic residues. Residues 89 to 108 (EQRELNEGKEESQHQQPDDS) form a disordered region. Residue 322–436 (YYEEWPTLSI…IIEDKDLFVA (115 aa)) coordinates a nucleoside 3',5'-cyclic phosphate.

The protein is Cyclic nucleotide-binding domain-containing protein 1 (CNBD1) of Homo sapiens (Human).